The primary structure comprises 227 residues: ATP synthase F(0) complex subunit a (227 aa).

The next 6 membrane-spanning stretches (helical) occupy residues 14–34 (FLGIPLIALAISIPWLMFPTP), 69–89 (WAILFTALMLFLITINLLGLL), 99–119 (LSLNMAFALPLWLTTVLIGMF), 139–159 (VPVLIIIETISLFIRPLALGV), 165–185 (LTAGHLLMQLIATAAFVLLTM), and 190–210 (ALLTSLVLFLLTILEVAVAMI).

The protein belongs to the ATPase A chain family. In terms of assembly, component of the ATP synthase complex composed at least of ATP5F1A/subunit alpha, ATP5F1B/subunit beta, ATP5MC1/subunit c (homooctomer), MT-ATP6/subunit a, MT-ATP8/subunit 8, ATP5ME/subunit e, ATP5MF/subunit f, ATP5MG/subunit g, ATP5MK/subunit k, ATP5MJ/subunit j, ATP5F1C/subunit gamma, ATP5F1D/subunit delta, ATP5F1E/subunit epsilon, ATP5PF/subunit F6, ATP5PB/subunit b, ATP5PD/subunit d, ATP5PO/subunit OSCP. ATP synthase complex consists of a soluble F(1) head domain (subunits alpha(3) and beta(3)) - the catalytic core - and a membrane F(0) domain - the membrane proton channel (subunits c, a, 8, e, f, g, k and j). These two domains are linked by a central stalk (subunits gamma, delta, and epsilon) rotating inside the F1 region and a stationary peripheral stalk (subunits F6, b, d, and OSCP). Interacts with DNAJC30; interaction is direct.

The protein resides in the mitochondrion inner membrane. The enzyme catalyses H(+)(in) = H(+)(out). Functionally, subunit a, of the mitochondrial membrane ATP synthase complex (F(1)F(0) ATP synthase or Complex V) that produces ATP from ADP in the presence of a proton gradient across the membrane which is generated by electron transport complexes of the respiratory chain. ATP synthase complex consist of a soluble F(1) head domain - the catalytic core - and a membrane F(1) domain - the membrane proton channel. These two domains are linked by a central stalk rotating inside the F(1) region and a stationary peripheral stalk. During catalysis, ATP synthesis in the catalytic domain of F(1) is coupled via a rotary mechanism of the central stalk subunits to proton translocation. With the subunit c (ATP5MC1), forms the proton-conducting channel in the F(0) domain, that contains two crucial half-channels (inlet and outlet) that facilitate proton movement from the mitochondrial intermembrane space (IMS) into the matrix. Protons are taken up via the inlet half-channel and released through the outlet half-channel, following a Grotthuss mechanism. In Scyliorhinus canicula (Small-spotted catshark), this protein is ATP synthase F(0) complex subunit a.